The following is a 95-amino-acid chain: Cobalt transport protein CbiN (95 aa).

The next 2 membrane-spanning stretches (helical) occupy residues Ile-7 to Gly-27 and Leu-67 to Tyr-87.

It belongs to the CbiN family. In terms of assembly, forms an energy-coupling factor (ECF) transporter complex composed of an ATP-binding protein (A component, CbiO), a transmembrane protein (T component, CbiQ) and 2 possible substrate-capture proteins (S components, CbiM and CbiN) of unknown stoichimetry.

Its subcellular location is the cell membrane. It participates in cofactor biosynthesis; adenosylcobalamin biosynthesis. Its function is as follows. Part of the energy-coupling factor (ECF) transporter complex CbiMNOQ involved in cobalt import. The sequence is that of Cobalt transport protein CbiN from Methanothermobacter marburgensis (strain ATCC BAA-927 / DSM 2133 / JCM 14651 / NBRC 100331 / OCM 82 / Marburg) (Methanobacterium thermoautotrophicum).